We begin with the raw amino-acid sequence, 56 residues long: uncharacterized protein (56 aa).

The chain crosses the membrane as a helical span at residues 6–26 (MLLIMLYMVLVVNDLILYNIL).

Its subcellular location is the membrane. This is an uncharacterized protein from Dictyostelium discoideum (Social amoeba).